A 372-amino-acid polypeptide reads, in one-letter code: N-methyl-L-tryptophan oxidase (372 aa).

4 to 34 (DLIIIGSGSVGAAAGYYATRAGLKVLMTDAH) lines the FAD pocket. An S-8alpha-FAD cysteine modification is found at Cys307.

The protein belongs to the MSOX/MTOX family. MTOX subfamily. As to quaternary structure, monomer. FAD is required as a cofactor.

It catalyses the reaction N(alpha)-methyl-L-tryptophan + O2 + H2O = L-tryptophan + formaldehyde + H2O2. In terms of biological role, catalyzes the oxidative demethylation of N-methyl-L-tryptophan. The polypeptide is N-methyl-L-tryptophan oxidase (Citrobacter koseri (strain ATCC BAA-895 / CDC 4225-83 / SGSC4696)).